A 218-amino-acid polypeptide reads, in one-letter code: Cytochrome c biogenesis ATP-binding export protein CcmA (218 aa).

The 216-residue stretch at L2–V217 folds into the ABC transporter domain. G34–T41 provides a ligand contact to ATP.

Belongs to the ABC transporter superfamily. CcmA exporter (TC 3.A.1.107) family. In terms of assembly, the complex is composed of two ATP-binding proteins (CcmA) and two transmembrane proteins (CcmB).

The protein resides in the cell inner membrane. It catalyses the reaction heme b(in) + ATP + H2O = heme b(out) + ADP + phosphate + H(+). In terms of biological role, part of the ABC transporter complex CcmAB involved in the biogenesis of c-type cytochromes; once thought to export heme, this seems not to be the case, but its exact role is uncertain. Responsible for energy coupling to the transport system. This chain is Cytochrome c biogenesis ATP-binding export protein CcmA, found in Yersinia pestis.